A 931-amino-acid chain; its full sequence is Up-regulator of cell proliferation (931 aa).

Ser-3 carries the phosphoserine modification. The 241-residue stretch at 689–929 (RSRLVVLSTV…NIQQLIELVR (241 aa)) folds into the VLIG-type G domain.

This sequence belongs to the TRAFAC class dynamin-like GTPase superfamily. Very large inducible GTPase (VLIG) family. In terms of tissue distribution, strongly expressed in hepatitis B virus-infected liver and in HCC cells. Also highly expressed in well-differentiated gastric cancer tissues and various gastric cancer cell lines.

The protein localises to the cytoplasm. The protein resides in the nucleus. Functionally, may be involved in cell cycle progression through the regulation of cyclin D1 expression. May participate in the development of hepatocellular carcinoma (HCC) by promoting hepatocellular growth and survival. May play an important role in development of gastric cancer. In Homo sapiens (Human), this protein is Up-regulator of cell proliferation (URGCP).